Here is an 85-residue protein sequence, read N- to C-terminus: Elicitor peptide 7 (85 aa).

The propeptide occupies 1 to 62; it reads MEGEGRREDG…TEVVNIPRSV (62 aa). Residues 66–85 form a disordered region; that stretch reads NVAARKGKQQTSSGKGGGTN.

It belongs to the brassicaceae elicitor peptide family.

Its function is as follows. Elicitor of plant defense. In Arabidopsis thaliana (Mouse-ear cress), this protein is Elicitor peptide 7 (PEP7).